The primary structure comprises 139 residues: MTFKRRRIREVAFQTLFAMVSDPEVDREQLYKELLPLAPQEEVPAYLEELVTGVSEHQAEFDQEIEGSLAAGWSLSRVEKPNLIILRLALYEMKYVDDVPVAVAIDEALEMTKKFSDDKSRKFINGVLGHIGGPKTTSN.

This sequence belongs to the NusB family.

Involved in transcription antitermination. Required for transcription of ribosomal RNA (rRNA) genes. Binds specifically to the boxA antiterminator sequence of the ribosomal RNA (rrn) operons. This chain is Transcription antitermination protein NusB, found in Limosilactobacillus fermentum (strain NBRC 3956 / LMG 18251) (Lactobacillus fermentum).